The sequence spans 204 residues: Probable nicotinate-nucleotide adenylyltransferase (204 aa).

It belongs to the NadD family.

The enzyme catalyses nicotinate beta-D-ribonucleotide + ATP + H(+) = deamido-NAD(+) + diphosphate. It participates in cofactor biosynthesis; NAD(+) biosynthesis; deamido-NAD(+) from nicotinate D-ribonucleotide: step 1/1. In terms of biological role, catalyzes the reversible adenylation of nicotinate mononucleotide (NaMN) to nicotinic acid adenine dinucleotide (NaAD). The protein is Probable nicotinate-nucleotide adenylyltransferase of Dehalococcoides mccartyi (strain CBDB1).